Consider the following 66-residue polypeptide: uncharacterized protein (66 aa).

Residues 5–59 (VKELRARFGYSQEKLGETVGVTRQTVAAIEKGDYVPSLLLALKICKAFSMKMEDV) enclose the HTH cro/C1-type domain. The H-T-H motif DNA-binding region spans 16 to 35 (QEKLGETVGVTRQTVAAIEK).

This is an uncharacterized protein from Bacillus subtilis (strain 168).